The following is a 214-amino-acid chain: Predicted GPI-anchored protein 57 (214 aa).

Positions 1-18 are cleaved as a signal peptide; sequence MLFTQLIILFTFISQIIC. Positions 36 to 101 are disordered; sequence RGSSGHSSGG…SSGSSSGSRN (66 aa). Residues 42 to 60 show a composition bias toward gly residues; that stretch reads SSGGGHSSSGSHSSGGGHS. The span at 76-85 shows a compositional bias: low complexity; sequence SGSSSGSSSG. An N-linked (GlcNAc...) asparagine glycan is attached at Asn182. Gly191 carries the GPI-anchor amidated glycine lipid modification. The propeptide at 192-214 is removed in mature form; that stretch reads VSLNIPSTHFYVIGLAAAYSIVL.

It belongs to the PGA37 family.

The protein resides in the secreted. The protein localises to the cell membrane. Functionally, predicted GPI-anchored protein which may have a role during host infection. The chain is Predicted GPI-anchored protein 57 (PGA57) from Candida albicans (strain SC5314 / ATCC MYA-2876) (Yeast).